We begin with the raw amino-acid sequence, 127 residues long: Egg cell-secreted protein 1.4 (127 aa).

Residues 1 to 25 (MASNTTFLFSTVTLLIILLNTTVSG) form the signal peptide.

It belongs to the plant egg cell-secreted peptide family. In terms of tissue distribution, restricted to female reproductive tissues, specifically accumulating in storage vesicles of the unfertilized egg cell.

It is found in the cytoplasmic vesicle. It localises to the secreted. In terms of biological role, involved in the regulation of gamete interactions during the double fertilization and to prevent multiple-pollen tube attraction; mediates the redistribution of the gamete fusogen HAP2/GCS1 to the cell surface after secretion upon sperm arrival. This is Egg cell-secreted protein 1.4 (EC1.4) from Arabidopsis thaliana (Mouse-ear cress).